The following is a 126-amino-acid chain: Glycine cleavage system H protein (126 aa).

The Lipoyl-binding domain maps to valine 22 to lysine 104. Lysine 63 is subject to N6-lipoyllysine.

This sequence belongs to the GcvH family. In terms of assembly, the glycine cleavage system is composed of four proteins: P, T, L and H. Requires (R)-lipoate as cofactor.

The glycine cleavage system catalyzes the degradation of glycine. The H protein shuttles the methylamine group of glycine from the P protein to the T protein. The protein is Glycine cleavage system H protein of Bacteroides fragilis (strain ATCC 25285 / DSM 2151 / CCUG 4856 / JCM 11019 / LMG 10263 / NCTC 9343 / Onslow / VPI 2553 / EN-2).